The following is a 619-amino-acid chain: Translation initiation factor IF-2 (619 aa).

Positions 120–289 (PRPPIVTIMG…ILLLGEVEGY (170 aa)) constitute a tr-type G domain. The interval 129–136 (GHVDHGKT) is G1. 129 to 136 (GHVDHGKT) contributes to the GTP binding site. Residues 154 to 158 (GITQK) form a G2 region. Residues 176 to 179 (DTPG) are G3. Residues 176–180 (DTPGH) and 230–233 (NKMD) contribute to the GTP site. The G4 stretch occupies residues 230-233 (NKMD). Residues 266-268 (SAL) form a G5 region.

The protein belongs to the TRAFAC class translation factor GTPase superfamily. Classic translation factor GTPase family. IF-2 subfamily.

It localises to the cytoplasm. One of the essential components for the initiation of protein synthesis. Protects formylmethionyl-tRNA from spontaneous hydrolysis and promotes its binding to the 30S ribosomal subunits. Also involved in the hydrolysis of GTP during the formation of the 70S ribosomal complex. The protein is Translation initiation factor IF-2 (infB) of Mycoplasma genitalium (strain ATCC 33530 / DSM 19775 / NCTC 10195 / G37) (Mycoplasmoides genitalium).